Reading from the N-terminus, the 310-residue chain is Cytochrome f (310 aa).

The N-terminal stretch at 1 to 27 is a signal peptide; sequence MRRLLSPLFAALIVGVTVLTAPSTSWA. Tyrosine 28, cysteine 48, cysteine 51, and histidine 52 together coordinate heme. Residues 277-297 traverse the membrane as a helical segment; sequence IYGLLAFFAAVALAQIMLVLK.

This sequence belongs to the cytochrome f family. As to quaternary structure, the 4 large subunits of the cytochrome b6-f complex are cytochrome b6, subunit IV (17 kDa polypeptide, PetD), cytochrome f and the Rieske protein, while the 4 small subunits are PetG, PetL, PetM and PetN. The complex functions as a dimer. Requires heme as cofactor.

It is found in the cellular thylakoid membrane. In terms of biological role, component of the cytochrome b6-f complex, which mediates electron transfer between photosystem II (PSII) and photosystem I (PSI), cyclic electron flow around PSI, and state transitions. The chain is Cytochrome f from Synechococcus sp. (strain WH7803).